We begin with the raw amino-acid sequence, 115 residues long: Virion-associated protein (115 aa).

2 coiled-coil regions span residues 1 to 28 and 33 to 54; these read MAATLSEIRELIQSLTKTANEIKAMLER and KPTGIEEAAAKIIKDIGDKIDQ. The segment covering 96-106 has biased composition (polar residues); that stretch reads GNEELGSSGNP. The disordered stretch occupies residues 96-115; it reads GNEELGSSGNPNAVKWPPRK.

It belongs to the caulimovirus ORF III family. In terms of assembly, homotetramer, through coiled-coil domain. Homotrimer when interacts with icosehadral capsid. Interacts with capsid protein, and with Movement protein.

It localises to the virion. It is found in the host cell junction. The protein localises to the host plasmodesma. Its function is as follows. Plays a role in virus cell-to-cell and plant-to-plant transmission. Interacts with virion icosahedral capsid and movement protein, thereby facilitating virion cell-to-cell transmission through plasmodesmata opened by viral movement protein. Also interacts with aphid transmission factor, attaching the virion to aphid stylet when the animal feeds on an virus infected plant. Aphid saliva may later detach the virion, inducing release of infectious particles when the animal feeds on a new plant. The polypeptide is Virion-associated protein (Scrophularia californica (California bee plant)).